Here is a 431-residue protein sequence, read N- to C-terminus: Nocturnin (431 aa).

The transit peptide at Met-1–Tyr-75 directs the protein to the mitochondrion. The segment covering Leu-20–Pro-31 has biased composition (low complexity). The segment at Leu-20–Pro-41 is disordered. The segment covering Leu-32 to Pro-41 has biased composition (pro residues). Glu-195 is a binding site for Mg(2+). Substrate-binding positions include Glu-195, Lys-219–Trp-221, Asn-263, His-286–Ala-289, and Asp-324–Asn-326. The segment at Asn-343–Ala-353 is interaction with PPARG. Substrate is bound at residue His-414.

It belongs to the CCR4/nocturin family. As to quaternary structure, interacts with PPARG. Mg(2+) is required as a cofactor. Adipose tissue. Expression is higher in subcutaneous adipose tissue as compared to visceral adipose tissue.

Its subcellular location is the cytoplasm. The protein resides in the nucleus. It is found in the perinuclear region. The protein localises to the mitochondrion. The enzyme catalyses NADP(+) + H2O = phosphate + NAD(+). It carries out the reaction NADPH + H2O = phosphate + NADH. Phosphatase which catalyzes the conversion of NADP(+) to NAD(+) and of NADPH to NADH. Shows a small preference for NADPH over NADP(+). Represses translation and promotes degradation of target mRNA molecules. Plays an important role in post-transcriptional regulation of metabolic genes under circadian control. Exerts a rhythmic post-transcriptional control of genes necessary for metabolic functions including nutrient absorption, glucose/insulin sensitivity, lipid metabolism, adipogenesis, inflammation and osteogenesis. Plays an important role in favoring adipogenesis over osteoblastogenesis and acts as a key regulator of the adipogenesis/osteogenesis balance. Promotes adipogenesis by facilitating PPARG nuclear translocation which activates its transcriptional activity. Regulates circadian expression of NOS2 in the liver and negatively regulates the circadian expression of IGF1 in the bone. Critical for proper development of early embryos. This chain is Nocturnin, found in Homo sapiens (Human).